Consider the following 1112-residue polypeptide: Lysylphosphatidylglycerol biosynthesis bifunctional protein LysX (1112 aa).

The interval 1 to 613 is phosphatidylglycerol lysyltransferase; it reads MTLTSPPRTR…VLHHDGTAPD (613 aa). The next 7 helical transmembrane spans lie at 18-38, 60-80, 84-104, 118-138, 152-172, 209-229, and 308-328; these read VPAA…IASV, FPDT…ALAA, IAWW…VADL, VIGL…RPLF, GVLA…LELF, VNAL…IVLF, and AWLA…ASVG. The segment at 614-1112 is lysine--tRNA ligase; that stretch reads MSGLRTDTAD…TLPFPLARPR (499 aa). The OB DNA-binding region spans 675 to 748; it reads VAGRVLRIRD…GTRSLLVRHW (74 aa). 2 residues coordinate Mg(2+): Asp-1024 and Glu-1031.

It in the N-terminal section; belongs to the LPG synthetase family. The protein in the C-terminal section; belongs to the class-II aminoacyl-tRNA synthetase family. Mg(2+) serves as cofactor.

The protein resides in the cell membrane. It catalyses the reaction tRNA(Lys) + L-lysine + ATP = L-lysyl-tRNA(Lys) + AMP + diphosphate. The catalysed reaction is L-lysyl-tRNA(Lys) + a 1,2-diacyl-sn-glycero-3-phospho-(1'-sn-glycerol) = a 1,2-diacyl-sn-glycero-3-phospho-1'-(3'-O-L-lysyl)-sn-glycerol + tRNA(Lys). In terms of biological role, catalyzes the production of L-lysyl-tRNA(Lys)transfer and the transfer of a lysyl group from L-lysyl-tRNA(Lys) to membrane-bound phosphatidylglycerol (PG), which produces lysylphosphatidylglycerol (LPG), one of the components of the bacterial membrane with a positive net charge. LPG synthesis contributes to the resistance to cationic antimicrobial peptides (CAMPs) and likely protects M.tuberculosis against the CAMPs produced by competiting microorganisms (bacteriocins). In fact, the modification of anionic phosphatidylglycerol with positively charged L-lysine results in repulsion of the peptides. In Mycobacterium sp. (strain KMS), this protein is Lysylphosphatidylglycerol biosynthesis bifunctional protein LysX (lysX).